We begin with the raw amino-acid sequence, 140 residues long: Transmembrane protein 107 (140 aa).

2 helical membrane passes run 7–27 (LVPS…TIFW) and 53–73 (LIIA…GFLS). Residue Asn79 is glycosylated (N-linked (GlcNAc...) asparagine). A run of 2 helical transmembrane segments spans residues 84-104 (LLSV…LFEG) and 113-133 (IMSF…IAVF).

It localises to the membrane. In terms of biological role, may play a role in cilia formation and embryonic patterning. This Xenopus laevis (African clawed frog) protein is Transmembrane protein 107 (tmem107).